Consider the following 821-residue polypeptide: MLRLLRHARRHSTSSSSSAAAAAVPLTSPAFAVFGANTGVGKTLVSAGLVASLLASPSPSPSTVAYLKPLQTGFPDDSDARFVFDRAPALLRRLRLAGGGASTRLVASNHTLFPSPAVDPLPERQDTVVNYGGEEGVEEKALVCRTVYAWREPVSPHLAAEREGMPVEDEEVRWLVDRWLAEEDGGGEVWKVLETAGGVASPGPSGTLQCDLYRSSRLPAVLVGDGRLGGISSTLSAYETLLLRGYDVGSVILEDRGLSNDRFLLSYLRKRVPVHVLPPIPEDPKDDLTDWFSESSSAFSSLKDSLQSFHSRRVQRLNSMQRKSKYLLWWPFTQHDLVPVDSVTVIDSRFGENFSAYKVKDKTIVPQFDACASWWTQGPDSNLQIELARDMGYAAARYGHVMFPENVHEPALRCAELLLGGVGKDWASRVYFSDNGSTAIEIALKMAFRKYACDHGIIVDSEKDIRSEGSVHFKVLALNGSYHGDTLGAMEAQAPSAYTSFLQQPWYSGRGLFLDPPTVYIKNKSANLSLPPSIMHDQLSSCDTCFSSLTEVFCKTRDTSSAANVYVSYISQQLSQYAMSNNSEHIAALIIEPVIQGAGGMHLIDPLFQRLLVKECKNRKIPVIFDEVFTGFWRLGVESASELLGCFPDISCYAKLMTGGIVPLAATLATEPIFEAFRSDSKLTALLHGHSYTAHPMGCTAAVKAIQWYKDPSTNSNIDLDRMKLKELWDSALVNHLSSLPNVKRVVSLGTLCAIELKAEGSDAGYASLYASSLIRQLREEDNIYARPLGNVIYLMCGPCTTQDSCTRQLAKVHRRLQKLN.

Positions 28 to 283 (SPAFAVFGAN…VHVLPPIPED (256 aa)) are dethiobiotin synthetase. ATP is bound at residue 39 to 44 (GVGKTL). Residue Thr-43 coordinates Mg(2+). A substrate-binding site is contributed by Thr-72. A Mg(2+)-binding site is contributed by Glu-194. 194–197 (ETAG) is an ATP binding site. The tract at residues 316–820 (RLNSMQRKSK…AKVHRRLQKL (505 aa)) is 7,8-diamino-pelargonic acid aminotransferase. 374–375 (WW) is a binding site for (8S)-8-amino-7-oxononanoate. Pyridoxal 5'-phosphate is bound at residue 436 to 437 (GS). Tyr-482 is a (8S)-8-amino-7-oxononanoate binding site. Asp-626 is a pyridoxal 5'-phosphate binding site. Lys-655 and Gly-689 together coordinate (8S)-8-amino-7-oxononanoate. Position 655 is an N6-(pyridoxal phosphate)lysine (Lys-655). Residue Ser-691 participates in pyridoxal 5'-phosphate binding. A (8S)-8-amino-7-oxononanoate-binding site is contributed by Arg-787.

It in the N-terminal section; belongs to the dethiobiotin synthetase family. The protein in the C-terminal section; belongs to the class-III pyridoxal-phosphate-dependent aminotransferase family. BioA subfamily. The cofactor is Mg(2+). Requires pyridoxal 5'-phosphate as cofactor.

Its subcellular location is the mitochondrion. The enzyme catalyses (7R,8S)-7,8-diammoniononanoate + CO2 + ATP = (4R,5S)-dethiobiotin + ADP + phosphate + 3 H(+). It carries out the reaction (8S)-8-amino-7-oxononanoate + S-adenosyl-L-methionine = S-adenosyl-4-methylsulfanyl-2-oxobutanoate + (7R,8S)-7,8-diammoniononanoate. It functions in the pathway cofactor biosynthesis; biotin biosynthesis; biotin from 7,8-diaminononanoate: step 1/2. The protein operates within cofactor biosynthesis; biotin biosynthesis; 7,8-diaminononanoate from 8-amino-7-oxononanoate (SAM route): step 1/1. Bifunctional enzyme that catalyzes two different reactions involved in the biotin biosynthesis. Its function is as follows. Catalyzes a mechanistically unusual reaction, the ATP-dependent insertion of CO2 between the N7 and N8 nitrogen atoms of 7,8-diaminopelargonic acid (DAPA) to form an ureido ring. In terms of biological role, catalyzes the transfer of the alpha-amino group from S-adenosyl-L-methionine (SAM) to 7-keto-8-aminopelargonic acid (KAPA) to form 7,8-diaminopelargonic acid (DAPA). It is the only aminotransferase known to utilize SAM as an amino donor. This Oryza sativa subsp. japonica (Rice) protein is Bifunctional dethiobiotin synthetase/7,8-diamino-pelargonic acid aminotransferase, mitochondrial (BIO3-BIO1).